The primary structure comprises 311 residues: RNA polymerase sigma factor SigA4 (311 aa).

A sigma-70 factor domain-2 region spans residues 78–148; the sequence is MLKANLRLVV…TRAIDNHART (71 aa). The Interaction with polymerase core subunit RpoC motif lies at 102-105; it reads DLIQ. The interval 157–234 is sigma-70 factor domain-3; that stretch reads EKISRIKKMT…DPKSLEPMDA (78 aa). Residues 247 to 304 form a sigma-70 factor domain-4 region; that stretch reads WLAHLTEREQQVLQLRFGLHDGEQHTLAEIGRRLNVSRERIRQVEARALQKLRVLSQQ. The segment at residues 273 to 292 is a DNA-binding region (H-T-H motif); that stretch reads LAEIGRRLNVSRERIRQVEA.

Belongs to the sigma-70 factor family.

It localises to the cytoplasm. Functionally, sigma factors are initiation factors that promote the attachment of RNA polymerase to specific initiation sites and are then released. The chain is RNA polymerase sigma factor SigA4 (sigA4) from Synechococcus elongatus (strain ATCC 33912 / PCC 7942 / FACHB-805) (Anacystis nidulans R2).